Here is a 312-residue protein sequence, read N- to C-terminus: Olfactory receptor 6C2 (312 aa).

Residues 1–23 (MKNHTVIRTFILLGLTGDPHLQV) are Extracellular-facing. An N-linked (GlcNAc...) asparagine glycan is attached at Asn3. Residues 24–44 (LLFIFLFLTYMLSVTGNLTII) traverse the membrane as a helical segment. The Cytoplasmic segment spans residues 45–52 (TLTLVDHH). A helical transmembrane segment spans residues 53–73 (LKTPMYFFLRNFSFLEVSFTT). At 74–97 (VCIPRFLYNISMGDNTITYNACAS) the chain is on the extracellular side. The N-linked (GlcNAc...) asparagine glycan is linked to Asn82. The cysteines at positions 95 and 187 are disulfide-linked. A helical transmembrane segment spans residues 98–118 (QIFFVILFGATEFFLLAAMSY). Over 119 to 137 (DRYVAICKPLHYVVIMNNR) the chain is Cytoplasmic. A helical transmembrane segment spans residues 138–158 (VCTLLVLCCWVAGLMIIVPPL). The Extracellular portion of the chain corresponds to 159–195 (SLGLQLEFCDSNAIDHFSCDAGPLLKISCSDTWVIEQ). The helical transmembrane segment at 196–215 (MVILMAVFALIITLVCVILS) threads the bilayer. The Cytoplasmic segment spans residues 216-235 (YLYIVRTILKFPSVQQRKKA). Residues 236–256 (FSTCSSHMIVVSIAYGSCIFI) form a helical membrane-spanning segment. At 257–269 (YIKPSAKDEVAIN) the chain is on the extracellular side. A helical transmembrane segment spans residues 270-290 (KGVSVLTTSVAPLLNPFIYTL). Residues 291-312 (RNKQVKQAFSDSIKRIAFLSKK) are Cytoplasmic-facing.

This sequence belongs to the G-protein coupled receptor 1 family.

Its subcellular location is the cell membrane. In terms of biological role, odorant receptor. This is Olfactory receptor 6C2 (OR6C2) from Homo sapiens (Human).